Reading from the N-terminus, the 463-residue chain is Putative pentatricopeptide repeat-containing protein At4g17915 (463 aa).

PPR repeat units lie at residues 12–46 (STRL…GVDP), 47–81 (DVVT…GIRP), 82–116 (DVAT…GIYP), 117–152 (DLWS…GLNP), 153–186 (GPDT…RFKP), 187–221 (ELMT…GYTP), 222–256 (NAVT…GYTY), 257–291 (DGYA…GRRH), 292–326 (DIVS…GMKA), 327–361 (DEYT…GIGL), 362–392 (NLVT…MEVK), and 393–427 (DEYT…GIKI).

The protein belongs to the PPR family. P subfamily.

This Arabidopsis thaliana (Mouse-ear cress) protein is Putative pentatricopeptide repeat-containing protein At4g17915.